We begin with the raw amino-acid sequence, 553 residues long: CTP synthase (553 aa).

The segment at 1 to 270 (MTKYVFVTGG…DDLICRELEL (270 aa)) is amidoligase domain. Ser13 lines the CTP pocket. Ser13 is a UTP binding site. ATP is bound by residues 14-19 (SLGKGI) and Asp71. Residues Asp71 and Glu144 each contribute to the Mg(2+) site. CTP contacts are provided by residues 151–153 (DIE), 191–196 (KTKPTQ), and Lys227. UTP is bound by residues 191-196 (KTKPTQ) and Lys227. Residues 295–547 (TIGMVGKYVE…IKAALIHQDA (253 aa)) form the Glutamine amidotransferase type-1 domain. Residue Gly356 participates in L-glutamine binding. The active-site Nucleophile; for glutamine hydrolysis is the Cys383. Residues 384–387 (LGMQ), Glu407, and Arg473 each bind L-glutamine. Catalysis depends on residues His520 and Glu522.

This sequence belongs to the CTP synthase family. Homotetramer.

The catalysed reaction is UTP + L-glutamine + ATP + H2O = CTP + L-glutamate + ADP + phosphate + 2 H(+). The enzyme catalyses L-glutamine + H2O = L-glutamate + NH4(+). It catalyses the reaction UTP + NH4(+) + ATP = CTP + ADP + phosphate + 2 H(+). It participates in pyrimidine metabolism; CTP biosynthesis via de novo pathway; CTP from UDP: step 2/2. With respect to regulation, allosterically activated by GTP, when glutamine is the substrate; GTP has no effect on the reaction when ammonia is the substrate. The allosteric effector GTP functions by stabilizing the protein conformation that binds the tetrahedral intermediate(s) formed during glutamine hydrolysis. Inhibited by the product CTP, via allosteric rather than competitive inhibition. Catalyzes the ATP-dependent amination of UTP to CTP with either L-glutamine or ammonia as the source of nitrogen. Regulates intracellular CTP levels through interactions with the four ribonucleotide triphosphates. This is CTP synthase from Polynucleobacter asymbioticus (strain DSM 18221 / CIP 109841 / QLW-P1DMWA-1) (Polynucleobacter necessarius subsp. asymbioticus).